The following is a 1683-amino-acid chain: E3 ubiquitin-protein ligase SHPRH (1683 aa).

Residues 1 to 43 are disordered; it reads MSSRRKRAPPVRVDEEKRQQLHWNMHEDRRNEPIIISDDDEQP. The span at 12-32 shows a compositional bias: basic and acidic residues; sequence RVDEEKRQQLHWNMHEDRRNE. S266 carries the post-translational modification Phosphoserine. Residues 307–389 form the Helicase ATP-binding; first part domain; sequence YQREAVNWML…TVEVLALILT (83 aa). 373 to 380 contacts ATP; sequence DEMGLGKT. The 75-residue stretch at 438–512 folds into the H15 domain; sequence QCPPTRVMIL…GFSGTFTLGK (75 aa). The tract at residues 525-607 is disordered; sequence KQAVGSPRKI…QGHCPATSDS (83 aa). The span at 534–547 shows a compositional bias: basic and acidic residues; the sequence is IQKETRKSGNKDTD. The span at 568–588 shows a compositional bias: basic residues; that stretch reads KSRRNRSKLRKKLVPSTKKGK. S635 carries the phosphoserine modification. The segment at 658–709 adopts a PHD-type zinc-finger fold; the sequence is RFECICGELDQIDRKPRVQCLKCHLWQHAKCVNYDEKNLKIKPFYCPHCLVA. The Helicase ATP-binding; second part domain occupies 710-868; it reads MEPVSTRATL…FGLVVFLGIE (159 aa). Positions 819–822 match the DEAQ box motif; that stretch reads DEAQ. The segment at 1432–1479 adopts an RING-type zinc-finger fold; it reads CPICARQLGKQWAVLTCGHCFCNECISIIIEQYSVGSHRSSIKCAICR. Residues 1514 to 1672 enclose the Helicase C-terminal domain; sequence AVVRTLMKIQ…ASVLTVADLA (159 aa).

Belongs to the SNF2/RAD54 helicase family. As to quaternary structure, homodimer. Interacts with HLTF, PCNA, UBE2N and RAD18. In terms of tissue distribution, broadly expressed.

It carries out the reaction S-ubiquitinyl-[E2 ubiquitin-conjugating enzyme]-L-cysteine + [acceptor protein]-L-lysine = [E2 ubiquitin-conjugating enzyme]-L-cysteine + N(6)-ubiquitinyl-[acceptor protein]-L-lysine.. It participates in protein modification; protein ubiquitination. Its function is as follows. E3 ubiquitin-protein ligase involved in DNA repair. Upon genotoxic stress, accepts ubiquitin from the UBE2N-UBE2V2 E2 complex and transfers it to 'Lys-164' of PCNA which had been monoubiquitinated by UBE2A/B-RAD18, promoting the formation of non-canonical poly-ubiquitin chains linked through 'Lys-63'. The chain is E3 ubiquitin-protein ligase SHPRH (SHPRH) from Homo sapiens (Human).